The chain runs to 185 residues: Elongation factor P (185 aa).

This sequence belongs to the elongation factor P family.

The protein localises to the cytoplasm. Its pathway is protein biosynthesis; polypeptide chain elongation. In terms of biological role, involved in peptide bond synthesis. Stimulates efficient translation and peptide-bond synthesis on native or reconstituted 70S ribosomes in vitro. Probably functions indirectly by altering the affinity of the ribosome for aminoacyl-tRNA, thus increasing their reactivity as acceptors for peptidyl transferase. This is Elongation factor P from Burkholderia mallei (strain NCTC 10247).